Reading from the N-terminus, the 757-residue chain is Xaa-Pro dipeptidyl-peptidase (757 aa).

Catalysis depends on charge relay system residues serine 348, aspartate 468, and histidine 498.

This sequence belongs to the peptidase S15 family. Homodimer.

The protein resides in the cytoplasm. It carries out the reaction Hydrolyzes Xaa-Pro-|- bonds to release unblocked, N-terminal dipeptides from substrates including Ala-Pro-|-p-nitroanilide and (sequentially) Tyr-Pro-|-Phe-Pro-|-Gly-Pro-|-Ile.. In terms of biological role, removes N-terminal dipeptides sequentially from polypeptides having unsubstituted N-termini provided that the penultimate residue is proline. The polypeptide is Xaa-Pro dipeptidyl-peptidase (Streptococcus pneumoniae (strain ATCC BAA-255 / R6)).